Reading from the N-terminus, the 531-residue chain is Tryptophan 6-halogenase ThaL (531 aa).

Residues G13, T15, A16, A39, I42, I45, V47, and A50 each coordinate FAD. K79 is an active-site residue. P111 provides a ligand contact to L-tryptophan. The FAD site is built by M198 and L349. Positions 360 and 361 each coordinate chloride. An FAD-binding site is contributed by I362. L-tryptophan is bound by residues Y454, Y455, E461, and F465.

This sequence belongs to the flavin-dependent halogenase family. Bacterial tryptophan halogenase subfamily. As to quaternary structure, homodimer. Monomer in solution.

It carries out the reaction L-tryptophan + FADH2 + chloride + O2 = 6-chloro-L-tryptophan + FAD + 2 H2O. The enzyme catalyses D-tryptophan + FADH2 + chloride + O2 = 6-chloro-D-tryptophan + FAD + 2 H2O. Functionally, involved in the biosynthesis of thienodolin, a plant growth-regulating compound. Catalyzes the chlorination of tryptophan (Trp) at C6 position to yield 6-chloro-tryptophan. It is also able to use bromide ions to generate monobrominated Trp. In vitro, accepts a wide range of amides and peptides carrying either L- or D-Trp at the N-terminus. This chain is Tryptophan 6-halogenase ThaL, found in Streptomyces albogriseolus.